Reading from the N-terminus, the 1771-residue chain is Atrochrysone carboxylic acid synthase (1771 aa).

Residues 38–269 (HLHSKDRRHH…SLPVFGGLCH (232 aa)) form an N-terminal acylcarrier protein transacylase domain (SAT) region. The 435-residue stretch at 402–836 (QSKIAIVGMS…GGNTSVVLEE (435 aa)) folds into the Ketosynthase family 3 (KS3) domain. Residues C575, H711, and H754 each act as for beta-ketoacyl synthase activity in the active site. A malonyl-CoA:ACP transacylase (MAT) domain region spans residues 937–1257 (FAFTGQGASY…LSSLHCAGVE (321 aa)). Residues 1322 to 1641 (TSTVQKIVEE…RLLLNRFFSP (320 aa)) are product template (PT) domain. Residues 1326–1461 (QKIVEESFDG…AKIYYCDASE (136 aa)) form an N-terminal hotdog fold region. The region spanning 1326–1636 (QKIVEESFDG…FRRYPRLLLN (311 aa)) is the PKS/mFAS DH domain. The active-site Proton acceptor; for dehydratase activity is H1358. A C-terminal hotdog fold region spans residues 1488 to 1636 (IANRFSGRMA…FRRYPRLLLN (149 aa)). Catalysis depends on D1547, which acts as the Proton donor; for dehydratase activity. Over residues 1668 to 1681 (AATSTTSTTSTAST) the composition is skewed to low complexity. A disordered region spans residues 1668–1695 (AATSTTSTTSTASTGQPPKVDETSPVDS). In terms of domain architecture, Carrier spans 1693-1770 (VDSNSTAARA…DLKSWLLEYY (78 aa)). S1730 bears the O-(pantetheine 4'-phosphoryl)serine mark.

The enzyme catalyses holo-[ACP] + 8 malonyl-CoA + 8 H(+) = atrochrysone carboxyl-[ACP] + 8 CO2 + 8 CoA + 2 H2O. Its pathway is secondary metabolite biosynthesis. Functionally, non-reducing polyketide synthase; part of the gene cluster that mediates the biosynthesis of geodin, an intermediate in the biosynthesis of other natural products. The pathway begins with the synthesis of atrochrysone thioester by the polyketide synthase (PKS) gedC. The atrochrysone carboxyl ACP thioesterase gedB then breaks the thioester bond and releases the atrochrysone carboxylic acid from gedC. The atrochrysone carboxylic acid is then converted to atrochrysone which is further transformed into emodinanthrone. The next step is performed by the emodinanthrone oxygenase gedH that catalyzes the oxidation of emodinanthrone to emodin. Emodin O-methyltransferase encoded probably by gedA then catalyzes methylation of the 8-hydroxy group of emodin to form questin. Ring cleavage of questin by questin oxidase gedK leads to desmethylsulochrin via several intermediates including questin epoxide. Another methylation step probably catalyzed by methyltransferase gedG leads to the formation of sulochrin which is further converted to dihydrogeodin by the sulochrin halogenase gedL. Finally, the dihydrogeodin oxidase gedJ catalyzes the stereospecific phenol oxidative coupling reaction converting dihydrogeodin to geodin. The sequence is that of Atrochrysone carboxylic acid synthase from Aspergillus terreus (strain NIH 2624 / FGSC A1156).